We begin with the raw amino-acid sequence, 198 residues long: Probable host range protein 2-3 (198 aa).

A disordered region spans residues 153–198; the sequence is GENGYEDSTEEEDNEEDTDGVCLYCLEEEEEEDEDEDEDEDEDEEE. 2 stretches are compositionally biased toward acidic residues: residues 156–171 and 178–198; these read GYED…EDTD and LEEE…DEEE.

This sequence belongs to the poxviridae C7 protein family.

Functionally, plays a role for multiplication of the virus in different cell types. The sequence is that of Probable host range protein 2-3 from Rabbit fibroma virus (strain Kasza) (RFV).